A 356-amino-acid polypeptide reads, in one-letter code: D-alanine--D-alanine ligase (356 aa).

The region spanning 134-339 (KQLFATRGLP…YSELITDLIN (206 aa)) is the ATP-grasp domain. 167–222 (EGKLTYPVFVKPANLGSSVGISKCTDSETLIHGIEEALQFDRKLVIEQGVNAREVE) lines the ATP pocket. Positions 293, 306, and 308 each coordinate Mg(2+).

This sequence belongs to the D-alanine--D-alanine ligase family. The cofactor is Mg(2+). Mn(2+) serves as cofactor.

It is found in the cytoplasm. The enzyme catalyses 2 D-alanine + ATP = D-alanyl-D-alanine + ADP + phosphate + H(+). The protein operates within cell wall biogenesis; peptidoglycan biosynthesis. In terms of biological role, cell wall formation. The chain is D-alanine--D-alanine ligase from Macrococcus caseolyticus (strain JCSC5402) (Macrococcoides caseolyticum).